We begin with the raw amino-acid sequence, 562 residues long: Putative transport protein Spro_1639 (562 aa).

Helical transmembrane passes span 8–28, 37–57, 66–86, 94–114, and 158–178; these read LLNG…LCLG, LGNS…HFAI, FMLF…SIFF, MLAL…GKLF, and HLSL…IFGA. RCK C-terminal domains are found at residues 202–288 and 290–373; these read LDTD…SFRN and KEVF…KIGF. 5 consecutive transmembrane segments (helical) span residues 383 to 403, 406 to 426, 447 to 467, 475 to 495, and 541 to 561; these read LLAF…TIQF, FSFG…LGFL, FGLM…IGNS, MLIA…LFGA, and IANV…PGIL.

This sequence belongs to the AAE transporter (TC 2.A.81) family. YbjL subfamily.

It is found in the cell membrane. In Serratia proteamaculans (strain 568), this protein is Putative transport protein Spro_1639.